The following is a 96-amino-acid chain: Large ribosomal subunit protein eL14 (96 aa).

This sequence belongs to the eukaryotic ribosomal protein eL14 family.

The chain is Large ribosomal subunit protein eL14 from Sulfurisphaera tokodaii (strain DSM 16993 / JCM 10545 / NBRC 100140 / 7) (Sulfolobus tokodaii).